Here is a 335-residue protein sequence, read N- to C-terminus: Galactosylgalactosylxylosylprotein 3-beta-glucuronosyltransferase 3 (335 aa).

At 1–7 the chain is on the cytoplasmic side; it reads MKLKLKN. The helical; Signal-anchor for type II membrane protein transmembrane segment at 8–28 threads the bilayer; it reads VFLAYFLVSIAGLLYALVQLG. Residues 29–335 are Lumenal-facing; sequence QPCDCLPPLR…GRGSDPAIEV (307 aa). UDP-alpha-D-glucuronate is bound by residues 82–84, Asp113, Arg156, Arg161, and 194–196; these read PTY and DDD. Asp196 is a Mn(2+) binding site. The tract at residues 243 to 252 is interaction with galactose moiety of substrate glycoprotein; sequence WEPSRPFPVD. Glu281 acts as the Proton donor/acceptor in catalysis. Residue Asn300 is glycosylated (N-linked (GlcNAc...) asparagine). Residue 308–310 participates in UDP-alpha-D-glucuronate binding; that stretch reads HTR. Residues 312-322 are compositionally biased toward basic and acidic residues; sequence EKPKMKQEEQL. A disordered region spans residues 312-335; it reads EKPKMKQEEQLQRQGRGSDPAIEV.

Belongs to the glycosyltransferase 43 family. Homodimer; disulfide-linked. Interacts with PXYLP1; the interaction increases the 2-phosphoxylose phosphatase activity of PXYLP1 during completion of linkage region formation in a B3GAT3-mediated manner. It depends on Mn(2+) as a cofactor. Post-translationally, N-glycosylated. Ubiquitous (but weakly expressed in all tissues examined).

The protein localises to the golgi apparatus membrane. The protein resides in the golgi apparatus. Its subcellular location is the cis-Golgi network. The catalysed reaction is 3-O-(beta-D-galactosyl-(1-&gt;3)-beta-D-galactosyl-(1-&gt;4)-beta-D-xylosyl)-L-seryl-[protein] + UDP-alpha-D-glucuronate = 3-O-(beta-D-GlcA-(1-&gt;3)-beta-D-Gal-(1-&gt;3)-beta-D-Gal-(1-&gt;4)-beta-D-Xyl)-L-seryl-[protein] + UDP + H(+). The protein operates within protein modification; protein glycosylation. With respect to regulation, inhibited by EDTA. Its function is as follows. Glycosaminoglycans biosynthesis. Involved in forming the linkage tetrasaccharide present in heparan sulfate and chondroitin sulfate. Transfers a glucuronic acid moiety from the uridine diphosphate-glucuronic acid (UDP-GlcUA) to the common linkage region trisaccharide Gal-beta-1,3-Gal-beta-1,4-Xyl covalently bound to a Ser residue at the glycosaminylglycan attachment site of proteoglycans. Can also play a role in the biosynthesis of l2/HNK-1 carbohydrate epitope on glycoproteins. Shows strict specificity for Gal-beta-1,3-Gal-beta-1,4-Xyl, exhibiting negligible incorporation into other galactoside substrates including Galbeta1-3Gal beta1-O-benzyl, Galbeta1-4GlcNAc and Galbeta1-4Glc. Stimulates 2-phosphoxylose phosphatase activity of PXYLP1 in presence of uridine diphosphate-glucuronic acid (UDP-GlcUA) during completion of linkage region formation. This Homo sapiens (Human) protein is Galactosylgalactosylxylosylprotein 3-beta-glucuronosyltransferase 3 (B3GAT3).